Consider the following 73-residue polypeptide: uncharacterized protein (73 aa).

Residues 48 to 73 (AKEPEKKTPSMEAKATSLSPNKASAS) are disordered. Positions 63-73 (TSLSPNKASAS) are enriched in polar residues.

This is an uncharacterized protein from Saccharomyces cerevisiae (strain ATCC 204508 / S288c) (Baker's yeast).